The following is a 473-amino-acid chain: Photosystem II CP43 reaction center protein (473 aa).

Residues 1-14 constitute a propeptide that is removed on maturation; that stretch reads MKTLYSLRRFYHVE. N-acetylthreonine is present on Thr-15. At Thr-15 the chain carries Phosphothreonine. 5 helical membrane-spanning segments follow: residues 69–93, 134–155, 178–200, 255–275, and 291–312; these read LFEV…PHLA, LLGP…KDRN, KALY…RKIT, KPFA…LSYS, and WFNN…ASQA. Glu-367 is a [CaMn4O5] cluster binding site. The chain crosses the membrane as a helical span at residues 447 to 471; the sequence is RARAAAAGFEKGIDRDFEPVLSMTP.

The protein belongs to the PsbB/PsbC family. PsbC subfamily. In terms of assembly, PSII is composed of 1 copy each of membrane proteins PsbA, PsbB, PsbC, PsbD, PsbE, PsbF, PsbH, PsbI, PsbJ, PsbK, PsbL, PsbM, PsbT, PsbX, PsbY, PsbZ, Psb30/Ycf12, at least 3 peripheral proteins of the oxygen-evolving complex and a large number of cofactors. It forms dimeric complexes. The cofactor is Binds multiple chlorophylls and provides some of the ligands for the Ca-4Mn-5O cluster of the oxygen-evolving complex. It may also provide a ligand for a Cl- that is required for oxygen evolution. PSII binds additional chlorophylls, carotenoids and specific lipids..

It localises to the plastid. Its subcellular location is the chloroplast thylakoid membrane. Functionally, one of the components of the core complex of photosystem II (PSII). It binds chlorophyll and helps catalyze the primary light-induced photochemical processes of PSII. PSII is a light-driven water:plastoquinone oxidoreductase, using light energy to abstract electrons from H(2)O, generating O(2) and a proton gradient subsequently used for ATP formation. This Arabis hirsuta (Hairy rock-cress) protein is Photosystem II CP43 reaction center protein.